The sequence spans 276 residues: Borealin (276 aa).

Residues 111–158 (KEAKSSANSEDENMAPLKSTMKKKKASKKAPSTSKKPRTLSISKQGGT) form a disordered region.

The protein belongs to the borealin family. In terms of assembly, component of the CPC complex.

The protein localises to the nucleus. It is found in the chromosome. It localises to the centromere. Its subcellular location is the cytoplasm. The protein resides in the cytoskeleton. The protein localises to the spindle. Functionally, component of the chromosomal passenger complex (CPC), a complex that acts as a key regulator of mitosis. The CPC complex has essential functions at the centromere in ensuring correct chromosome alignment and segregation and is required for chromatin-induced microtubule stabilization and spindle assembly. This Danio rerio (Zebrafish) protein is Borealin (cdca8).